We begin with the raw amino-acid sequence, 1474 residues long: Alpha-2-macroglobulin (1474 aa).

An N-terminal signal peptide occupies residues 1–23 (MGKNKLLHPSLVLLLLVLLPTDA). A disulfide bridge connects residues C48 and C86. N55, N70, and N247 each carry an N-linked (GlcNAc...) asparagine glycan. 2 disulfides stabilise this stretch: C251–C299 and C269–C287. 2 N-linked (GlcNAc...) asparagine glycosylation sites follow: N396 and N410. 8 disulfides stabilise this stretch: C470–C563, C595–C771, C642–C689, C821–C849, C847–C883, C921–C1321, C1079–C1127, and C1352–C1467. The bait region stretch occupies residues 690–728 (PQLQQYEMHGPEGLRVGFYESDVMGRGHARLVHAEEPPT). Isoglutamyl lysine isopeptide (Gln-Lys) (interchain with K-? in other proteins) cross-links involve residues Q693 and Q694. Inhibitory stretches follow at residues 704-709 (RVGFYE), 719-723 (RLVHA), and 730-735 (TVRKYF). N869 carries an N-linked (GlcNAc...) asparagine glycan. The segment at residues 972 to 975 (CGEQ) is a cross-link (isoglutamyl cysteine thioester (Cys-Gln)). A glycan (N-linked (GlcNAc...) asparagine) is linked at N991. The N-linked (GlcNAc...) asparagine glycan is linked to N1424.

The protein belongs to the protease inhibitor I39 (alpha-2-macroglobulin) family. As to quaternary structure, homotetramer; disulfide-linked. As to expression, plasma.

Its subcellular location is the secreted. Functionally, is able to inhibit all four classes of proteinases by a unique 'trapping' mechanism. This protein has a peptide stretch, called the 'bait region' which contains specific cleavage sites for different proteinases. When a proteinase cleaves the bait region, a conformational change is induced in the protein which traps the proteinase. The entrapped enzyme remains active against low molecular weight substrates (activity against high molecular weight substrates is greatly reduced). Following cleavage in the bait region a thioester bond is hydrolyzed and mediates the covalent binding of the protein to the proteinase. This chain is Alpha-2-macroglobulin (A2M), found in Pongo abelii (Sumatran orangutan).